Here is a 137-residue protein sequence, read N- to C-terminus: NADH-quinone oxidoreductase subunit A (137 aa).

3 helical membrane-spanning segments follow: residues 12–32 (WGFA…LGLS), 66–86 (FYLV…LFAW), and 95–115 (WTGF…LVYL).

Belongs to the complex I subunit 3 family. In terms of assembly, NDH-1 is composed of 13 different subunits. Subunits NuoA, H, J, K, L, M, N constitute the membrane sector of the complex.

Its subcellular location is the cell inner membrane. It catalyses the reaction a quinone + NADH + 5 H(+)(in) = a quinol + NAD(+) + 4 H(+)(out). Its function is as follows. NDH-1 shuttles electrons from NADH, via FMN and iron-sulfur (Fe-S) centers, to quinones in the respiratory chain. The immediate electron acceptor for the enzyme in this species is believed to be ubiquinone. Couples the redox reaction to proton translocation (for every two electrons transferred, four hydrogen ions are translocated across the cytoplasmic membrane), and thus conserves the redox energy in a proton gradient. The polypeptide is NADH-quinone oxidoreductase subunit A (Pseudomonas savastanoi pv. phaseolicola (strain 1448A / Race 6) (Pseudomonas syringae pv. phaseolicola (strain 1448A / Race 6))).